Here is a 455-residue protein sequence, read N- to C-terminus: MLDIKLIREKPELVKKDLIKRGETEKVKWIDEILELDRKWRENLKKINQLRKERNQLAVQIGKRKKAGEPIEDLLARSNEIVKQIEELEKEVEALKKKIDYYLWRLPNITHESVPVGKDDTENVPIRFWGKAKVWEGFLESFKEQSLGKMDYEVLSWRPRLHVDMLELLRGADLERAAKVSGSRFYYLLNELVILDLALIRFALDRLIEKGFTPVIPPYMVRRFVEEGATTFEDFEDVIYKVEGEDLYLIPTAEHPLAGMHANEILDGKDLPLLYVGVSPCFRKEAGTAGKDTKGIFRVHQFHKVEQFVYSRPEESWEWHEKIIANAEELFQELEIPYRVVNICTGDLGYVAAKKYDIEAWMAGQGKFREVVSASNCTDWQARRLNIRFRDKTHEKPKFVHTLNSTAIATSRAIVAILENHQTEEGVVKLPKALWKYTGFKEILPASMKEKCCQD.

252-254 (TAE) is an L-serine binding site. ATP contacts are provided by residues 283 to 285 (RKE) and Val299. An L-serine-binding site is contributed by Glu306. An ATP-binding site is contributed by 370 to 373 (EVVS). Thr406 contacts L-serine.

Belongs to the class-II aminoacyl-tRNA synthetase family. Type-1 seryl-tRNA synthetase subfamily. Homodimer. The tRNA molecule binds across the dimer.

It is found in the cytoplasm. It carries out the reaction tRNA(Ser) + L-serine + ATP = L-seryl-tRNA(Ser) + AMP + diphosphate + H(+). The enzyme catalyses tRNA(Sec) + L-serine + ATP = L-seryl-tRNA(Sec) + AMP + diphosphate + H(+). It participates in aminoacyl-tRNA biosynthesis; selenocysteinyl-tRNA(Sec) biosynthesis; L-seryl-tRNA(Sec) from L-serine and tRNA(Sec): step 1/1. In terms of biological role, catalyzes the attachment of serine to tRNA(Ser). Is also able to aminoacylate tRNA(Sec) with serine, to form the misacylated tRNA L-seryl-tRNA(Sec), which will be further converted into selenocysteinyl-tRNA(Sec). The sequence is that of Serine--tRNA ligase from Thermococcus gammatolerans (strain DSM 15229 / JCM 11827 / EJ3).